The chain runs to 439 residues: tRNA modification GTPase MnmE (439 aa).

(6S)-5-formyl-5,6,7,8-tetrahydrofolate-binding residues include arginine 23, glutamate 80, and lysine 120. One can recognise a TrmE-type G domain in the interval 217–365 (GLKIVIAGEP…LLTALQSHLP (149 aa)). Asparagine 227 contributes to the K(+) binding site. Residues 227 to 232 (NAGKSS), 246 to 252 (TEVAGTT), and 271 to 274 (DTAG) each bind GTP. Serine 231 contributes to the Mg(2+) binding site. Residues threonine 246, valine 248, and threonine 251 each contribute to the K(+) site. Mg(2+) is bound at residue threonine 252. Lysine 439 contributes to the (6S)-5-formyl-5,6,7,8-tetrahydrofolate binding site.

The protein belongs to the TRAFAC class TrmE-Era-EngA-EngB-Septin-like GTPase superfamily. TrmE GTPase family. In terms of assembly, homodimer. Heterotetramer of two MnmE and two MnmG subunits. The cofactor is K(+).

The protein resides in the cytoplasm. In terms of biological role, exhibits a very high intrinsic GTPase hydrolysis rate. Involved in the addition of a carboxymethylaminomethyl (cmnm) group at the wobble position (U34) of certain tRNAs, forming tRNA-cmnm(5)s(2)U34. The polypeptide is tRNA modification GTPase MnmE (Rhizobium meliloti (strain 1021) (Ensifer meliloti)).